The following is a 261-amino-acid chain: Pantothenate synthetase (261 aa).

29–36 (MGALHNGH) is a binding site for ATP. His36 functions as the Proton donor in the catalytic mechanism. Gln60 provides a ligand contact to (R)-pantoate. Gln60 is a binding site for beta-alanine. Position 147 to 150 (147 to 150 (GEKD)) interacts with ATP. Gln153 provides a ligand contact to (R)-pantoate. Residue 184-187 (LSSR) participates in ATP binding.

This sequence belongs to the pantothenate synthetase family. Homodimer.

The protein localises to the cytoplasm. It catalyses the reaction (R)-pantoate + beta-alanine + ATP = (R)-pantothenate + AMP + diphosphate + H(+). It participates in cofactor biosynthesis; (R)-pantothenate biosynthesis; (R)-pantothenate from (R)-pantoate and beta-alanine: step 1/1. Functionally, catalyzes the condensation of pantoate with beta-alanine in an ATP-dependent reaction via a pantoyl-adenylate intermediate. The chain is Pantothenate synthetase from Francisella tularensis subsp. novicida (strain U112).